The primary structure comprises 469 residues: Uronate isomerase (469 aa).

It belongs to the metallo-dependent hydrolases superfamily. Uronate isomerase family.

The catalysed reaction is D-glucuronate = D-fructuronate. The enzyme catalyses aldehydo-D-galacturonate = keto-D-tagaturonate. It participates in carbohydrate metabolism; pentose and glucuronate interconversion. The polypeptide is Uronate isomerase (Mesorhizobium japonicum (strain LMG 29417 / CECT 9101 / MAFF 303099) (Mesorhizobium loti (strain MAFF 303099))).